The sequence spans 816 residues: H(+)/Cl(-) exchange transporter 5 (816 aa).

The Cytoplasmic segment spans residues 1–124 (MAMWQGAMDN…WALIHSVSDA (124 aa)). Helical transmembrane passes span 125–162 (FSGW…ICTG) and 208–231 (VNYF…VKAF). Residues 237-241 (GSGIP) carry the Selectivity filter part_1 motif. Ser238 is a binding site for chloride. An intramembrane region (helical) is located at residues 240 to 247 (IPEIKTIL). 2 helical membrane-spanning segments follow: residues 256–275 (LGKW…VSSG) and 281–300 (EGPL…HCFN). The Selectivity filter part_2 motif lies at 279–283 (GKEGP). 2 intramembrane regions (helical) span residues 312-324 (VLSA…VSVA) and 328-336 (PIGGVLFSL). The next 5 helical transmembrane spans lie at 348 to 366 (LWRS…RSIN), 389 to 414 (LVPF…IAWC), 422 to 442 (LGKY…ILAF), 498 to 518 (MWQL…TFGM), and 523 to 542 (GLFI…LGVG). The Selectivity filter part_3 motif lies at 523-527 (GLFIP). Phe525 contributes to the chloride binding site. The segment at residues 570-584 (GLYAMVGAAACLGGV) is an intramembrane region (helical). Positions 585–587 (TRM) form an intramembrane region, note=Loop between two helices. The helical intramembrane region spans 588–599 (TVSLVVIMFELT). Positions 600-604 (GGLEY) form an intramembrane region, note=Loop between two helices. The chain crosses the membrane as a helical span at residues 605–622 (IVPLMAAAMTSKWVADAL). Residues 623–816 (GREGIYDAHI…NQDPESILFN (194 aa)) lie on the Cytoplasmic side of the membrane. Residue Tyr628 coordinates chloride. 2 consecutive CBS domains span residues 656–720 (MKPR…ARKK) and 752–811 (ILDL…QDPE). Residues Thr666, 687-689 (YSG), and 794-797 (TKKD) contribute to the ATP site.

It belongs to the chloride channel (TC 2.A.49) family. ClC-5/CLCN5 subfamily. As to quaternary structure, interacts with NEDD4 and NEDD4L. Post-translationally, ubiquitinated by NEDD4L in the presence of albumin; which promotes endocytosis and proteasomal degradation. As to expression, kidney specific.

It localises to the golgi apparatus membrane. The protein localises to the endosome membrane. Its subcellular location is the cell membrane. It carries out the reaction 2 chloride(in) + H(+)(out) = 2 chloride(out) + H(+)(in). Proton-coupled chloride transporter. Functions as antiport system and exchanges chloride ions against protons. Important for normal acidification of the endosome lumen. May play an important role in renal tubular function. The CLC channel family contains both chloride channels and proton-coupled anion transporters that exchange chloride or another anion for protons. The absence of conserved gating glutamate residues is typical for family members that function as channels. In Rattus norvegicus (Rat), this protein is H(+)/Cl(-) exchange transporter 5 (Clcn5).